Here is a 273-residue protein sequence, read N- to C-terminus: Multidrug-efflux transporter 2 regulator (273 aa).

In terms of domain architecture, HTH merR-type spans 8 to 77 (YFTTGEFSKL…LKEIKCLIKG (70 aa)). Positions 11–30 (TGEFSKLCRVKKQTLFHYDE) form a DNA-binding region, H-T-H motif.

Activates transcription of the blt gene in response to structurally dissimilar drugs. This chain is Multidrug-efflux transporter 2 regulator (bltR), found in Bacillus subtilis (strain 168).